Reading from the N-terminus, the 248-residue chain is PF03932 family protein CutC (248 aa).

This sequence belongs to the CutC family.

The protein resides in the cytoplasm. This is PF03932 family protein CutC from Photorhabdus laumondii subsp. laumondii (strain DSM 15139 / CIP 105565 / TT01) (Photorhabdus luminescens subsp. laumondii).